Here is a 92-residue protein sequence, read N- to C-terminus: Small ribosomal subunit protein uS19 (92 aa).

This sequence belongs to the universal ribosomal protein uS19 family.

Protein S19 forms a complex with S13 that binds strongly to the 16S ribosomal RNA. The sequence is that of Small ribosomal subunit protein uS19 from Roseobacter denitrificans (strain ATCC 33942 / OCh 114) (Erythrobacter sp. (strain OCh 114)).